Consider the following 148-residue polypeptide: uncharacterized protein (148 aa).

Residues V65–D79 show a composition bias toward low complexity. The tract at residues V65–G85 is disordered.

This is an uncharacterized protein from Saccharomyces cerevisiae (strain ATCC 204508 / S288c) (Baker's yeast).